Reading from the N-terminus, the 280-residue chain is Urease accessory protein UreD (280 aa).

This sequence belongs to the UreD family. As to quaternary structure, ureD, UreF and UreG form a complex that acts as a GTP-hydrolysis-dependent molecular chaperone, activating the urease apoprotein by helping to assemble the nickel containing metallocenter of UreC. The UreE protein probably delivers the nickel.

It is found in the cytoplasm. Its function is as follows. Required for maturation of urease via the functional incorporation of the urease nickel metallocenter. This Staphylococcus saprophyticus subsp. saprophyticus (strain ATCC 15305 / DSM 20229 / NCIMB 8711 / NCTC 7292 / S-41) protein is Urease accessory protein UreD.